The primary structure comprises 322 residues: Beta-ketoacyl-[acyl-carrier-protein] synthase III (322 aa).

Catalysis depends on residues Cys-113 and His-249. An ACP-binding region spans residues 250-254 (QANIR). Residue Asn-279 is part of the active site.

This sequence belongs to the thiolase-like superfamily. FabH family. Homodimer.

The protein resides in the cytoplasm. It carries out the reaction malonyl-[ACP] + acetyl-CoA + H(+) = 3-oxobutanoyl-[ACP] + CO2 + CoA. Its pathway is lipid metabolism; fatty acid biosynthesis. In terms of biological role, catalyzes the condensation reaction of fatty acid synthesis by the addition to an acyl acceptor of two carbons from malonyl-ACP. Catalyzes the first condensation reaction which initiates fatty acid synthesis and may therefore play a role in governing the total rate of fatty acid production. Possesses both acetoacetyl-ACP synthase and acetyl transacylase activities. Its substrate specificity determines the biosynthesis of branched-chain and/or straight-chain of fatty acids. This Thioalkalivibrio sulfidiphilus (strain HL-EbGR7) protein is Beta-ketoacyl-[acyl-carrier-protein] synthase III.